The following is a 561-amino-acid chain: Urocanate hydratase (561 aa).

Residues 52–53 (GG), Gln130, 176–178 (GMG), Glu196, Arg201, 242–243 (NA), 263–267 (QTSAH), 273–274 (YL), and Tyr322 contribute to the NAD(+) site. Cys410 is an active-site residue. Gly492 is an NAD(+) binding site.

This sequence belongs to the urocanase family. It depends on NAD(+) as a cofactor.

The protein localises to the cytoplasm. The catalysed reaction is 4-imidazolone-5-propanoate = trans-urocanate + H2O. It functions in the pathway amino-acid degradation; L-histidine degradation into L-glutamate; N-formimidoyl-L-glutamate from L-histidine: step 2/3. Functionally, catalyzes the conversion of urocanate to 4-imidazolone-5-propionate. The chain is Urocanate hydratase from Salmonella agona (strain SL483).